Here is a 192-residue protein sequence, read N- to C-terminus: uncharacterized protein (192 aa).

The interval 168-192 is disordered; it reads PLWRKSEAGSRKARTSNSGGPTKRA. A compositionally biased stretch (polar residues) spans 182 to 192; it reads TSNSGGPTKRA.

The protein to A.xylinum IS1268 ORFA.

This is an uncharacterized protein from Sinorhizobium fredii (strain NBRC 101917 / NGR234).